We begin with the raw amino-acid sequence, 209 residues long: RNA chaperone ProQ (209 aa).

Residues 101-155 (LAESKAKVQARRKEQAQKAREEGKAKAKPAANKKPQQPRRTNKPKVQKPTKPVET) are disordered. Over residues 111 to 125 (RRKEQAQKAREEGKA) the composition is skewed to basic and acidic residues. Residues 136-148 (QQPRRTNKPKVQK) show a composition bias toward basic residues.

It belongs to the ProQ family.

Its subcellular location is the cytoplasm. Functionally, RNA chaperone with significant RNA binding, RNA strand exchange and RNA duplexing activities. This is RNA chaperone ProQ from Vibrio parahaemolyticus serotype O3:K6 (strain RIMD 2210633).